The following is a 247-amino-acid chain: Aliphatic sulfonates import ATP-binding protein SsuB 2 (247 aa).

The ABC transporter domain occupies 28–242 (VSVRGLQRRY…ALRPILLEEL (215 aa)). 60–67 (GESGCGKT) provides a ligand contact to ATP.

It belongs to the ABC transporter superfamily. Aliphatic sulfonates importer (TC 3.A.1.17.2) family. As to quaternary structure, the complex is composed of two ATP-binding proteins (SsuB), two transmembrane proteins (SsuC) and a solute-binding protein (SsuA).

It localises to the cell inner membrane. The enzyme catalyses ATP + H2O + aliphatic sulfonate-[sulfonate-binding protein]Side 1 = ADP + phosphate + aliphatic sulfonateSide 2 + [sulfonate-binding protein]Side 1.. Its function is as follows. Part of the ABC transporter complex SsuABC involved in aliphatic sulfonates import. Responsible for energy coupling to the transport system. The polypeptide is Aliphatic sulfonates import ATP-binding protein SsuB 2 (Paraburkholderia xenovorans (strain LB400)).